A 303-amino-acid chain; its full sequence is Acetaldehyde dehydrogenase 1 (303 aa).

Cysteine 130 (acyl-thioester intermediate) is an active-site residue. Residues 161-169 (SVGPGTRKN) and asparagine 272 each bind NAD(+).

The protein belongs to the acetaldehyde dehydrogenase family.

The catalysed reaction is acetaldehyde + NAD(+) + CoA = acetyl-CoA + NADH + H(+). This Cupriavidus metallidurans (strain ATCC 43123 / DSM 2839 / NBRC 102507 / CH34) (Ralstonia metallidurans) protein is Acetaldehyde dehydrogenase 1.